Reading from the N-terminus, the 610-residue chain is Elongation factor 4 (610 aa).

The region spanning 13-195 (SHIRNFSIVA…AIVRKLPAPK (183 aa)) is the tr-type G domain. Residues 25 to 30 (DHGKST) and 142 to 145 (NKID) contribute to the GTP site.

This sequence belongs to the TRAFAC class translation factor GTPase superfamily. Classic translation factor GTPase family. LepA subfamily.

It localises to the cell inner membrane. The catalysed reaction is GTP + H2O = GDP + phosphate + H(+). In terms of biological role, required for accurate and efficient protein synthesis under certain stress conditions. May act as a fidelity factor of the translation reaction, by catalyzing a one-codon backward translocation of tRNAs on improperly translocated ribosomes. Back-translocation proceeds from a post-translocation (POST) complex to a pre-translocation (PRE) complex, thus giving elongation factor G a second chance to translocate the tRNAs correctly. Binds to ribosomes in a GTP-dependent manner. The polypeptide is Elongation factor 4 (Rhizobium etli (strain CIAT 652)).